The following is a 73-amino-acid chain: Salivary protein FS48 (73 aa).

A signal peptide spans 1 to 21 (MKFAFAIFVVLAILHTELISA).

The protein resides in the secreted. Functionally, salivary protein that inhibits host voltage-gated potassium channels Kv1.1/KCNA1, Kv1.2/KCNA2 and Kv1.3/KCNA3 likely via a voltage-independent pore-blocking mechanism. Suppresses expression of the Kv1.3/KCNA3 channel in lipopolysaccharide (LPS)-stimulated mouse macrophages and human T-cells. Down-regulates secretion of nitric oxide (NO) and inflammatory cytokines, such as TNF-alpha/TNF, IL-1beta/IL1B and IL6, in LPS-stimulated mouse macrophages in a manner dependent on Kv1.3/KCNA3 channel blockage. Reduces activation of MAPK and NF-kappa-B signaling pathways in LPS-stimulated mouse macrophages. Modulates intracellular Ca(2+) signaling in human PMA/ionomycin-triggered T-cells. Interferes with the activation of the MAPK, NF-kappa-B and NFATc1 pathways in human PMA/ionomycin-triggered T-cells. Reduces proliferation of human PMA/ionomycin-triggered T-cells. Down-regulates secretion of cytokines, such as TNF-alpha/TNF and IL2, in human PMA/ionomycin-triggered T-cells. This Xenopsylla cheopis (Oriental rat flea) protein is Salivary protein FS48.